The chain runs to 154 residues: Small ribosomal subunit protein bS16 (154 aa).

The interval valine 82–alanine 154 is disordered. Basic and acidic residues predominate over residues lysine 92–alanine 109. Residues lysine 110–proline 129 are compositionally biased toward low complexity. Residues proline 142–alanine 154 show a composition bias toward acidic residues.

The protein belongs to the bacterial ribosomal protein bS16 family.

This chain is Small ribosomal subunit protein bS16, found in Rhizorhabdus wittichii (strain DSM 6014 / CCUG 31198 / JCM 15750 / NBRC 105917 / EY 4224 / RW1) (Sphingomonas wittichii).